Here is a 273-residue protein sequence, read N- to C-terminus: Proteasome subunit beta type-7-A (273 aa).

Positions 1 to 37 (MSQSTVDVPPKGGFSFDLCKRNDMLTQKGLKAPSFLK) are cleaved as a propeptide — removed in mature form. T40 functions as the Nucleophile in the catalytic mechanism.

It belongs to the peptidase T1B family. In terms of assembly, component of the 20S core complex of the 26S proteasome. The 26S proteasome is composed of a core protease (CP), known as the 20S proteasome, capped at one or both ends by the 19S regulatory particle (RP/PA700). The 20S proteasome core is composed of 28 subunits that are arranged in four stacked rings, resulting in a barrel-shaped structure. The two end rings are each formed by seven alpha subunits, and the two central rings are each formed by seven beta subunits. The catalytic chamber with the active sites is on the inside of the barrel.

Its subcellular location is the cytoplasm. It is found in the nucleus. It carries out the reaction Cleavage of peptide bonds with very broad specificity.. The proteasome is a multicatalytic proteinase complex which is characterized by its ability to cleave peptides with Arg, Phe, Tyr, Leu, and Glu adjacent to the leaving group at neutral or slightly basic pH. The proteasome has an ATP-dependent proteolytic activity. The chain is Proteasome subunit beta type-7-A (PBB1) from Arabidopsis thaliana (Mouse-ear cress).